A 286-amino-acid chain; its full sequence is uncharacterized protein (286 aa).

Disordered stretches follow at residues 1–38, 108–146, 196–227, and 241–286; these read MSQK…EDDV, HTGE…RRHK, RTQK…KTRL, and DVDD…PRSS. The span at 18 to 29 shows a compositional bias: low complexity; that stretch reads SSSKQVLSSTSS. Residues 243 to 268 are compositionally biased toward basic and acidic residues; the sequence is DDQKKDGSGEEKKEKKSAEKEKKISH. Residues 269–278 show a composition bias toward polar residues; sequence ENVQSLSPSS.

This is an uncharacterized protein from Caenorhabditis elegans.